Here is a 203-residue protein sequence, read N- to C-terminus: MSQLTLTLLMIVAAYLAGSVSSAVLVCRMRGLPDPRSQGSGNPGATNVLRIGGASSAAMVLFFDMLKGALPTYLAYLMGIDAISLGLIAIAACLGHIYPIFFGFKGGKGVATAFGAMAPIGDDLAICLMASWVVLVLISRYSSLAAIITALLAPLYTWWLDDRFTIPVAMLSTLIIIRHKENIQRLLKGEESKVSRKKRPKAP.

The next 4 membrane-spanning stretches (helical) occupy residues 6–26 (LTLL…AVLV), 82–102 (AISL…PIFF), 118–138 (APIG…LVLI), and 141–161 (YSSL…WWLD).

This sequence belongs to the PlsY family. Probably interacts with PlsX.

The protein resides in the cell inner membrane. It carries out the reaction an acyl phosphate + sn-glycerol 3-phosphate = a 1-acyl-sn-glycero-3-phosphate + phosphate. Its pathway is lipid metabolism; phospholipid metabolism. Functionally, catalyzes the transfer of an acyl group from acyl-phosphate (acyl-PO(4)) to glycerol-3-phosphate (G3P) to form lysophosphatidic acid (LPA). This enzyme utilizes acyl-phosphate as fatty acyl donor, but not acyl-CoA or acyl-ACP. In Shewanella sp. (strain MR-7), this protein is Glycerol-3-phosphate acyltransferase.